We begin with the raw amino-acid sequence, 3848 residues long: Intermembrane lipid transfer protein tipC (3848 aa).

A Chorein N-terminal domain is found at 4-112 (HIAASVLTKY…KFQDEKQAKL (109 aa)). Disordered stretches follow at residues 243–268 (IKKEDSGKQQQQQQQQQGEEQDDEIE), 450–481 (LKLQQQQQQQQQNLNKISPTTTTTPSTSTGGG), 966–985 (QQLQPQQKQQSPPLISSPPL), 1174–1219 (KNNQ…NNNS), 1326–1345 (ERKLNNKTSPTTPSSSGVST), 1907–1926 (ENINNNNNNNLTTSTTTTTT), 2024–2047 (DDYNDDNYNSNGNNNNNNSNNQLP), 2209–2290 (IKPA…NKNL), 2330–2353 (FNPKFSSSSSSSQQQQQQPLSPLL), 2509–2541 (KQLNNQLQQQSNNNNNNNNNNNNTNSNNSNLLG), 3209–3228 (GITNDPNNPNNPNNNPNNND), and 3310–3342 (INQQPNQQSSSPQSTNTTTTTTTNTTTTNNTTQ). Composition is skewed to low complexity over residues 251–260 (QQQQQQQQQG) and 452–477 (LQQQQQQQQQNLNKISPTTTTTPSTS). Low complexity predominate over residues 1175–1190 (NNQNNNQNNNQNNNQN). Polar residues predominate over residues 1191–1200 (INESSPTVFI). The segment covering 1202 to 1211 (SPPPPPPPPL) has biased composition (pro residues). The span at 1333-1345 (TSPTTPSSSGVST) shows a compositional bias: low complexity. 3 stretches are compositionally biased toward low complexity: residues 2029-2044 (DNYNSNGNNNNNNSNN), 2217-2289 (NNNN…NNKN), and 2335-2353 (SSSSSSSQQQQQQPLSPLL). Low complexity-rich tracts occupy residues 3212–3228 (NDPNNPNNPNNNPNNND) and 3311–3342 (NQQPNQQSSSPQSTNTTTTTTTNTTTTNNTTQ).

Belongs to the VPS13 family.

It is found in the membrane. Its function is as follows. Mediates the transfer of lipids between membranes at organelle contact sites. This chain is Intermembrane lipid transfer protein tipC (tipC), found in Dictyostelium discoideum (Social amoeba).